Consider the following 199-residue polypeptide: Peptidyl-tRNA hydrolase (199 aa).

Residue Tyr-18 participates in tRNA binding. His-23 (proton acceptor) is an active-site residue. The tRNA site is built by Tyr-72, Asn-74, and Asn-120.

The protein belongs to the PTH family. Monomer.

The protein localises to the cytoplasm. It carries out the reaction an N-acyl-L-alpha-aminoacyl-tRNA + H2O = an N-acyl-L-amino acid + a tRNA + H(+). Hydrolyzes ribosome-free peptidyl-tRNAs (with 1 or more amino acids incorporated), which drop off the ribosome during protein synthesis, or as a result of ribosome stalling. In terms of biological role, catalyzes the release of premature peptidyl moieties from peptidyl-tRNA molecules trapped in stalled 50S ribosomal subunits, and thus maintains levels of free tRNAs and 50S ribosomes. In Bifidobacterium longum (strain DJO10A), this protein is Peptidyl-tRNA hydrolase.